The primary structure comprises 460 residues: Photosystem II CP43 reaction center protein (460 aa).

Residues 1–35 (MVTLSNTSMVGGRDLPSTGFAWWSGNARLINLSGK) lie on the Cytoplasmic side of the membrane. A helical membrane pass occupies residues 36-58 (LLGAHVAHAGLIVFWAGAMTLFE). At 59–98 (VAHFIPEKPMYEQGLILLPHIATLGWGVGPAGEVTDIFPF) the chain is on the lumenal, thylakoid side. The chain crosses the membrane as a helical span at residues 99-121 (FVVGVLHLISSAVLGLGGIYHAL). The Cytoplasmic portion of the chain corresponds to 122-142 (RGPEVLEEYSSFFGYDWKDKN). The chain crosses the membrane as a helical span at residues 143 to 165 (QMTNIIGYHLILLGCGALLLVFK). The Lumenal, thylakoid segment spans residues 166 to 220 (AMFFGGVYDTWAPGGGDVRVITNPTLNPAIIFGYLLKAPFGGEGWIISVNNMEDI). The chain crosses the membrane as a helical span at residues 221–240 (IGGHIWIGLICISGGIWHIL). At 241–255 (TKPFGWARRALIWSG) the chain is on the cytoplasmic side. The helical transmembrane segment at 256–276 (EAYLSYSLGALSLMGFIASVF) threads the bilayer. Topologically, residues 277-411 (VWFNNTAYPS…NSFNYVSPRA (135 aa)) are lumenal, thylakoid. [CaMn4O5] cluster contacts are provided by Glu-341 and Arg-344. A helical membrane pass occupies residues 412 to 436 (WLATSHFVLGFFFLVGHLWHAGRAR). Topologically, residues 437-460 (AAAAGFEKGIDRETEPTLFMPDLD) are cytoplasmic.

This sequence belongs to the PsbB/PsbC family. PsbC subfamily. In terms of assembly, PSII is composed of 1 copy each of membrane proteins PsbA, PsbB, PsbC, PsbD, PsbE, PsbF, PsbH, PsbI, PsbJ, PsbK, PsbL, PsbM, PsbT, PsbX, PsbY, PsbZ, Psb30/Ycf12, peripheral proteins PsbO, CyanoQ (PsbQ), PsbU, PsbV and a large number of cofactors. It forms dimeric complexes. Requires Binds multiple chlorophylls and provides some of the ligands for the Ca-4Mn-5O cluster of the oxygen-evolving complex. It may also provide a ligand for a Cl- that is required for oxygen evolution. PSII binds additional chlorophylls, carotenoids and specific lipids. as cofactor.

Its subcellular location is the cellular thylakoid membrane. In terms of biological role, one of the components of the core complex of photosystem II (PSII). PSII binds chlorophyll and helps catalyze the primary light-induced photochemical processes of PSII. PSII is a light-driven water:plastoquinone oxidoreductase, using light energy to abstract electrons from H(2)O, generating O(2) and a proton gradient subsequently used for ATP formation. Required for correct assembly of PSII. The sequence is that of Photosystem II CP43 reaction center protein from Synechocystis sp. (strain ATCC 27184 / PCC 6803 / Kazusa).